Consider the following 399-residue polypeptide: MDEGGGGEGGSVPEDLSLEEREELLDIRRRKKELIDDIERLKYEIAEVMTEIDNLTSVEESKTTQRNKQIAMGRKKFNMDPKKGIQFLIENDLLQSSPEDVAQFLYKGEGLNKTVIGDYLGERDDFNIKVLQAFVELHEFADLNLVQALRQFLWSFRLPGEAQKIDRMMEAFASRYCLCNPGVFQSTDTCYVLSFAIIMLNTSLHNHNVRDKPTAERFITMNRGINEGGDLPEELLRNLYESIKNEPFKIPEDDGNDLTHTFFNPDREGWLLKLGGRVKTWKRRWFILTDNCLYYFEYTTDKEPRGIIPLENLSIREVEDPRKPNCFELYNPSHKGQVIKACKTEADGRVVEGNHVVYRISAPSPEEKEEWMKSIKASISRDPFYDMLATRKRRIANKK.

Residues 14-61 (EDLSLEEREELLDIRRRKKELIDDIERLKYEIAEVMTEIDNLTSVEES) are a coiled coil. The 130-residue stretch at 77-206 (FNMDPKKGIQ…IIMLNTSLHN (130 aa)) folds into the SEC7 domain. Residues 264–380 (NPDREGWLLK…WMKSIKASIS (117 aa)) form the PH domain. Residues 273 to 280 (KLGGRVKT), R284, Y295, R305, and N354 each bind a 1,2-diacyl-sn-glycero-3-phospho-(1D-myo-inositol-3,4,5-trisphosphate). A C-terminal autoinhibitory region region spans residues 391 to 399 (RKRRIANKK).

As to quaternary structure, interacts with TAMALIN. Interacts with FRMD4A. Interacts with FRMD4B.

It is found in the cytoplasm. The protein resides in the cytosol. Its subcellular location is the cell membrane. It localises to the cell junction. The protein localises to the adherens junction. It is found in the tight junction. Functionally, promotes guanine-nucleotide exchange on ARF1. Promotes the activation of ARF factors through replacement of GDP with GTP. Plays a role in the epithelial polarization. The sequence is that of Cytohesin-3 (Cyth3) from Mus musculus (Mouse).